A 512-amino-acid chain; its full sequence is MVLDLDLFRVDKGGDPALIRETQEKRFKDPGLVDQLVKADSEWRRCRFRADNLNKLKNLCSKTIGEKMKKKEAVGDDESVPENVLNFDDLTADALAALKVSQIKKVRLLIDEAIQKCDGERVKLEAERFENLREIGNLLHPSVPISNDEDADNKVERIWGDCTVRKKYSHVDLVVMVDGFEGEKGAVVAGSRGYFLKGPLVFLEQALIQYALRTLGSRGYTPIYTPFFMRKEVMQEVAQLSQFDEELYKVIGKGSEKSDDNSYDEKYLIATSEQPIAALHRDEWLRPEDLPIKYAGLSTCFRQEVGSHGRDTRGIFRVHQFEKIEQFVYSSPHDNKSWEMFDEMIATAEEFYQSLGIPYHIVNIVSGSLNHAASKKLDLEAWFPGSGAFRELVSCSNCTDYQARRLRIRYGQTKKMMDKVEFVHMLNATMCATTRTICAILENYQAEKGIAVPEKLREFMPPGLQELIPFVKPAPIDQEPSKKQKKQHEGSKKKAKEVPLENQLQSMEVTEA.

An N-acetylmethionine modification is found at M1. Positions 9 to 61 are interaction with tRNA; that stretch reads RVDKGGDPALIRETQEKRFKDPGLVDQLVKADSEWRRCRFRADNLNKLKNLCS. S241 bears the Phosphoserine mark. T271 and R302 together coordinate L-serine. Residues 302 to 304 and 318 to 321 contribute to the ATP site; these read RQE and VHQF. K323 carries the post-translational modification N6-acetyllysine. E325 contacts L-serine. ATP is bound at residue 391 to 394; sequence ELVS. An L-serine-binding site is contributed by N427. Residues 470–512 form a disordered region; that stretch reads FVKPAPIDQEPSKKQKKQHEGSKKKAKEVPLENQLQSMEVTEA. Positions 479 to 499 are enriched in basic and acidic residues; sequence EPSKKQKKQHEGSKKKAKEVP. Residues 482–494 carry the Nuclear localization signal motif; that stretch reads KKQKKQHEGSKKK. Residues 502-512 are compositionally biased toward polar residues; it reads NQLQSMEVTEA. S506 carries the phosphoserine modification.

This sequence belongs to the class-II aminoacyl-tRNA synthetase family. Type-1 seryl-tRNA synthetase subfamily. As to quaternary structure, homodimer. The tRNA molecule may bind across the dimer. Interacts with SIRT2. Interacts with METTL6; interaction is required for the tRNA N(3)-methylcytidine methyltransferase activity of METTL6.

Its subcellular location is the cytoplasm. The protein resides in the nucleus. It catalyses the reaction tRNA(Ser) + L-serine + ATP = L-seryl-tRNA(Ser) + AMP + diphosphate + H(+). The catalysed reaction is tRNA(Sec) + L-serine + ATP = L-seryl-tRNA(Sec) + AMP + diphosphate + H(+). The protein operates within aminoacyl-tRNA biosynthesis; selenocysteinyl-tRNA(Sec) biosynthesis; L-seryl-tRNA(Sec) from L-serine and tRNA(Sec): step 1/1. Functionally, catalyzes the attachment of serine to tRNA(Ser) in a two-step reaction: serine is first activated by ATP to form Ser-AMP and then transferred to the acceptor end of tRNA(Ser). Is probably also able to aminoacylate tRNA(Sec) with serine, to form the misacylated tRNA L-seryl-tRNA(Sec), which will be further converted into selenocysteinyl-tRNA(Sec). In the nucleus, binds to the VEGFA core promoter and prevents MYC binding and transcriptional activation by MYC. Recruits SIRT2 to the VEGFA promoter, promoting deacetylation of histone H4 at 'Lys-16' (H4K16). Thereby, inhibits the production of VEGFA and sprouting angiogenesis mediated by VEGFA. The polypeptide is Serine--tRNA ligase, cytoplasmic (Sars1) (Mus musculus (Mouse)).